Consider the following 360-residue polypeptide: Histidinol-phosphate aminotransferase (360 aa).

An N6-(pyridoxal phosphate)lysine modification is found at lysine 213.

It belongs to the class-II pyridoxal-phosphate-dependent aminotransferase family. Histidinol-phosphate aminotransferase subfamily. Homodimer. Pyridoxal 5'-phosphate serves as cofactor.

The catalysed reaction is L-histidinol phosphate + 2-oxoglutarate = 3-(imidazol-4-yl)-2-oxopropyl phosphate + L-glutamate. Its pathway is amino-acid biosynthesis; L-histidine biosynthesis; L-histidine from 5-phospho-alpha-D-ribose 1-diphosphate: step 7/9. The protein is Histidinol-phosphate aminotransferase of Baumannia cicadellinicola subsp. Homalodisca coagulata.